We begin with the raw amino-acid sequence, 274 residues long: 4-deoxy-L-threo-5-hexosulose-uronate ketol-isomerase (274 aa).

Zn(2+)-binding residues include H192, H194, E199, and H241.

The protein belongs to the KduI family. Zn(2+) is required as a cofactor.

The catalysed reaction is 5-dehydro-4-deoxy-D-glucuronate = 3-deoxy-D-glycero-2,5-hexodiulosonate. It participates in glycan metabolism; pectin degradation; 2-dehydro-3-deoxy-D-gluconate from pectin: step 4/5. Functionally, catalyzes the isomerization of 5-dehydro-4-deoxy-D-glucuronate to 3-deoxy-D-glycero-2,5-hexodiulosonate. This chain is 4-deoxy-L-threo-5-hexosulose-uronate ketol-isomerase, found in Shigella boydii serotype 18 (strain CDC 3083-94 / BS512).